We begin with the raw amino-acid sequence, 585 residues long: GRR1-like protein 1 (585 aa).

Positions 1–48 (MGLRFPPKVLEHILSFIDSNEDRNSVSLVCKSWFETERKTRKRVFVGN) constitute an F-box domain. K70 contributes to the 1D-myo-inositol hexakisphosphate binding site. The interaction with auxin-responsive proteins stretch occupies residues 77–78 (DY). 1D-myo-inositol hexakisphosphate contacts are provided by residues 109–110 (KR) and R340. The interval 343–348 (PSEPDL) is interaction with auxin-responsive proteins. 397–399 (CFR) serves as a coordination point for 1D-myo-inositol hexakisphosphate. Positions 401-405 (CVIEP) are interaction with auxin-responsive proteins. Position 432 (R432) interacts with 1D-myo-inositol hexakisphosphate. An interaction with auxin-responsive proteins region spans residues 460–461 (AF). 1D-myo-inositol hexakisphosphate is bound by residues 480–481 (KK) and R505.

Part of a SCF (SKP1-cullin-F-box) protein ligase complex. Interacts with CUL1, SKP1A/ASK1 and SKP1B/ASK2. Interacts with Aux/IAA proteins (IAA7 and IAA12) in an auxin-dependent manner. In terms of tissue distribution, ubiquitous.

The protein resides in the nucleus. It functions in the pathway protein modification; protein ubiquitination. Its function is as follows. Component of SCF(ASK-cullin-F-box) E3 ubiquitin ligase complexes, which may mediate the ubiquitination and subsequent proteasomal degradation of target proteins. Auxin receptor that mediates Aux/IAA proteins proteasomal degradation and auxin-regulated transcription. Involved in embryogenesis regulation by auxin. Confers sensitivity to the virulent bacterial pathogen P.syringae. Mediates glucose repression in yeast. This Arabidopsis thaliana (Mouse-ear cress) protein is GRR1-like protein 1 (GRH1).